A 371-amino-acid polypeptide reads, in one-letter code: Carbamoyl phosphate synthase small chain (371 aa).

The CPSase stretch occupies residues 1–186 (MDYYNNDTPG…IHQGKTGDVV (186 aa)). Residues Ser-52, Gly-233, and Gly-235 each contribute to the L-glutamine site. Residues 185–371 (VVVVVDCGIK…KFKKMVVGDA (187 aa)) enclose the Glutamine amidotransferase type-1 domain. Cys-261 functions as the Nucleophile in the catalytic mechanism. Positions 262, 265, 303, 305, and 306 each coordinate L-glutamine. Residues His-346 and Glu-348 contribute to the active site.

The protein belongs to the CarA family. As to quaternary structure, composed of two chains; the small (or glutamine) chain promotes the hydrolysis of glutamine to ammonia, which is used by the large (or ammonia) chain to synthesize carbamoyl phosphate. Tetramer of heterodimers (alpha,beta)4.

It carries out the reaction hydrogencarbonate + L-glutamine + 2 ATP + H2O = carbamoyl phosphate + L-glutamate + 2 ADP + phosphate + 2 H(+). It catalyses the reaction L-glutamine + H2O = L-glutamate + NH4(+). It participates in amino-acid biosynthesis; L-arginine biosynthesis; carbamoyl phosphate from bicarbonate: step 1/1. It functions in the pathway pyrimidine metabolism; UMP biosynthesis via de novo pathway; (S)-dihydroorotate from bicarbonate: step 1/3. In terms of biological role, small subunit of the glutamine-dependent carbamoyl phosphate synthetase (CPSase). CPSase catalyzes the formation of carbamoyl phosphate from the ammonia moiety of glutamine, carbonate, and phosphate donated by ATP, constituting the first step of 2 biosynthetic pathways, one leading to arginine and/or urea and the other to pyrimidine nucleotides. The small subunit (glutamine amidotransferase) binds and cleaves glutamine to supply the large subunit with the substrate ammonia. In Sulfolobus acidocaldarius (strain ATCC 33909 / DSM 639 / JCM 8929 / NBRC 15157 / NCIMB 11770), this protein is Carbamoyl phosphate synthase small chain.